A 184-amino-acid polypeptide reads, in one-letter code: Protein GrpE (184 aa).

A disordered region spans residues 1 to 24 (MADEQLDEKNLNSEEAGAVNGDAR).

Belongs to the GrpE family. Homodimer.

Its subcellular location is the cytoplasm. Participates actively in the response to hyperosmotic and heat shock by preventing the aggregation of stress-denatured proteins, in association with DnaK and GrpE. It is the nucleotide exchange factor for DnaK and may function as a thermosensor. Unfolded proteins bind initially to DnaJ; upon interaction with the DnaJ-bound protein, DnaK hydrolyzes its bound ATP, resulting in the formation of a stable complex. GrpE releases ADP from DnaK; ATP binding to DnaK triggers the release of the substrate protein, thus completing the reaction cycle. Several rounds of ATP-dependent interactions between DnaJ, DnaK and GrpE are required for fully efficient folding. The sequence is that of Protein GrpE from Pseudomonas entomophila (strain L48).